A 435-amino-acid polypeptide reads, in one-letter code: Eukaryotic peptide chain release factor subunit 1 (435 aa).

This sequence belongs to the eukaryotic release factor 1 family. Heterodimer of two subunits, one of which binds GTP.

Its subcellular location is the cytoplasm. Directs the termination of nascent peptide synthesis (translation) in response to the termination codons UAA, UAG and UGA. The sequence is that of Eukaryotic peptide chain release factor subunit 1 (SU2) from Podospora anserina (Pleurage anserina).